A 193-amino-acid chain; its full sequence is Putative 3-methyladenine DNA glycosylase (193 aa).

It belongs to the DNA glycosylase MPG family.

The sequence is that of Putative 3-methyladenine DNA glycosylase from Nitrosospira multiformis (strain ATCC 25196 / NCIMB 11849 / C 71).